We begin with the raw amino-acid sequence, 569 residues long: Mitogen-activated protein kinase 8 (569 aa).

Positions 13-304 constitute a Protein kinase domain; the sequence is YKIQEVIGKG…AEEALADPYF (292 aa). Residues 19–27 and K42 contribute to the ATP site; that span reads IGKGSYGVV. The active-site Proton acceptor is D139. T175 carries the post-translational modification Phosphothreonine. The short motif at 175-177 is the TXY element; sequence TDY. Y177 is modified (phosphotyrosine). The interval 404–432 is disordered; sequence TTVHSAPIPPKDHQNITSQVPQRIPGRTG.

It belongs to the protein kinase superfamily. CMGC Ser/Thr protein kinase family. MAP kinase subfamily. In terms of processing, dually phosphorylated on Thr-175 and Tyr-177, which activates the enzyme. In terms of tissue distribution, expressed in leaves and panicles.

The enzyme catalyses L-seryl-[protein] + ATP = O-phospho-L-seryl-[protein] + ADP + H(+). It catalyses the reaction L-threonyl-[protein] + ATP = O-phospho-L-threonyl-[protein] + ADP + H(+). Activated by threonine and tyrosine phosphorylation. The protein is Mitogen-activated protein kinase 8 (MPK8) of Oryza sativa subsp. japonica (Rice).